Here is a 345-residue protein sequence, read N- to C-terminus: S-adenosylmethionine:tRNA ribosyltransferase-isomerase (345 aa).

Belongs to the QueA family. As to quaternary structure, monomer.

It is found in the cytoplasm. The catalysed reaction is 7-aminomethyl-7-carbaguanosine(34) in tRNA + S-adenosyl-L-methionine = epoxyqueuosine(34) in tRNA + adenine + L-methionine + 2 H(+). It functions in the pathway tRNA modification; tRNA-queuosine biosynthesis. In terms of biological role, transfers and isomerizes the ribose moiety from AdoMet to the 7-aminomethyl group of 7-deazaguanine (preQ1-tRNA) to give epoxyqueuosine (oQ-tRNA). The sequence is that of S-adenosylmethionine:tRNA ribosyltransferase-isomerase from Shewanella baltica (strain OS185).